Here is a 1070-residue protein sequence, read N- to C-terminus: [F-actin]-monooxygenase MICAL1 (1070 aa).

Positions 1–489 (MASTISTNPA…RDLYDMEAKE (489 aa)) are monooxygenase domain. FAD contacts are provided by residues Cys-95, 114–116 (EKR), 121–123 (RHN), Phe-181, Tyr-293, and Asp-393. Residue Thr-475 is modified to Phosphothreonine. A Calponin-homology (CH) domain is found at 508–612 (VGSQEELLRW…YLSHFHSAFK (105 aa)). Residues 643-690 (QRTRTQENGEDAGGKKPRLEVKAETPSTEEPPVPKPDEPMTPPSQQQD) are disordered. A compositionally biased stretch (basic and acidic residues) spans 646 to 665 (RTQENGEDAGGKKPRLEVKA). Positions 671 to 684 (EEPPVPKPDEPMTP) are enriched in pro residues. The LIM zinc-binding domain maps to 695–757 (DLCALCGQHL…LQHLPQTGHE (63 aa)). Residues Cys-697, Cys-700, His-718, Cys-721, Cys-724, Cys-727, Cys-747, and His-750 each coordinate Zn(2+). 2 disordered regions span residues 754-838 (TGHE…RSCS) and 865-887 (MEMG…EDVP). The segment covering 755 to 766 (GHEEDSSDRGPE) has biased composition (basic and acidic residues). The segment covering 770–781 (LPMSSENNTPSG) has biased composition (polar residues). Phosphoserine is present on residues Ser-793, Ser-875, and Ser-876. A compositionally biased stretch (acidic residues) spans 876–887 (SEEETEEEEDVP). The interval 904–1070 (GTMNNYPTWR…ELASEPGVQG (167 aa)) is important for interaction with RAB8A. Residues 921-1070 (KEEEMKRFCK…ELASEPGVQG (150 aa)) form the bMERB domain. Positions 928–1030 (FCKAQAIQRR…EETLKTAADR (103 aa)) form a coiled coil. Ser-1060 bears the Phosphoserine mark.

It belongs to the Mical family. In terms of assembly, interacts with STK38 and STK38L. Associates with the SH3 domain of NEDD9. Interacts with VIM and PLXNA3. Interacts with RAB1B, RAB8A, RAB10, RAB13 and RAB15 (in their GTP-bound forms); binding to RAB1B is of low affinity compared to other Rab proteins; at least in case of RAB8A and RAB10 can bind 2 molecules of the Rab proteins simultaneously. Interacts with GRAF1/ARHGAP26, GRAF2/ARHGAP10, RAB8A, RAB8B and RAB10; may bind simultaneously to GRAFs and Rabs and connects GRAFs to Rabs. Does not interact with RAB1 and RAB11A. It depends on FAD as a cofactor.

The protein localises to the cytoplasm. Its subcellular location is the cytoskeleton. It localises to the endosome membrane. It is found in the midbody. It carries out the reaction L-methionyl-[F-actin] + NADPH + O2 + H(+) = L-methionyl-(R)-S-oxide-[F-actin] + NADP(+) + H2O. It catalyses the reaction NADPH + O2 + H(+) = H2O2 + NADP(+). Its function is as follows. Monooxygenase that promotes depolymerization of F-actin by mediating oxidation of specific methionine residues on actin to form methionine-sulfoxide, resulting in actin filament disassembly and preventing repolymerization. In the absence of actin, it also functions as a NADPH oxidase producing H(2)O(2). Acts as a cytoskeletal regulator that connects NEDD9 to intermediate filaments. Also acts as a negative regulator of apoptosis via its interaction with STK38 and STK38L; acts by antagonizing STK38 and STK38L activation by MST1/STK4. Involved in regulation of lamina-specific connectivity in the nervous system such as the development of lamina-restricted hippocampal connections. Through redox regulation of the actin cytoskeleton controls the intracellular distribution of secretory vesicles containing L1/neurofascin/NgCAM family proteins in neurons, thereby regulating their cell surface levels. May act as Rab effector protein and play a role in vesicle trafficking. Promotes endosomal tubule extension by associating with RAB8 (RAB8A or RAB8B), RAB10 and GRAF (GRAF1/ARHGAP26 or GRAF2/ARHGAP10) on the endosomal membrane which may connect GRAFs to Rabs, thereby participating in neosynthesized Rab8-Rab10-Rab11-dependent protein export. The polypeptide is [F-actin]-monooxygenase MICAL1 (MICAL1) (Bos taurus (Bovine)).